We begin with the raw amino-acid sequence, 389 residues long: Chalcone synthase 1 (389 aa).

C164 is a catalytic residue.

It belongs to the thiolase-like superfamily. Chalcone/stilbene synthases family.

The enzyme catalyses (E)-4-coumaroyl-CoA + 3 malonyl-CoA + 3 H(+) = 2',4,4',6'-tetrahydroxychalcone + 3 CO2 + 4 CoA. Its pathway is secondary metabolite biosynthesis; flavonoid biosynthesis. Its function is as follows. The primary product of this enzyme is 4,2',4',6'-tetrahydroxychalcone (also termed naringenin-chalcone or chalcone) which can under specific conditions spontaneously isomerize into naringenin. The polypeptide is Chalcone synthase 1 (CHS1) (Pisum sativum (Garden pea)).